The primary structure comprises 122 residues: Large ribosomal subunit protein uL14 (122 aa).

The protein belongs to the universal ribosomal protein uL14 family. Part of the 50S ribosomal subunit. Forms a cluster with proteins L3 and L19. In the 70S ribosome, L14 and L19 interact and together make contacts with the 16S rRNA in bridges B5 and B8.

Binds to 23S rRNA. Forms part of two intersubunit bridges in the 70S ribosome. The chain is Large ribosomal subunit protein uL14 from Verminephrobacter eiseniae (strain EF01-2).